Consider the following 109-residue polypeptide: U-scoloptoxin(16)-Ssd1a (109 aa).

Positions 1–23 are cleaved as a signal peptide; it reads MTTSATVIIMVLCVGSLVIFSEG.

In terms of processing, contains 4 disulfide bonds. In terms of tissue distribution, expressed by the venom gland.

The protein localises to the secreted. In Scolopendra dehaani (Thai centipede), this protein is U-scoloptoxin(16)-Ssd1a.